The primary structure comprises 508 residues: Photosystem II CP47 reaction center protein (508 aa).

The next 6 helical transmembrane spans lie at 21–36 (SVHI…WAGS), 101–115 (IVFS…IWHW), 140–156 (GIHL…SGAF), 203–218 (IAAG…FHLS), 237–252 (VLSS…AFIV), and 457–472 (TFAL…HGAR).

This sequence belongs to the PsbB/PsbC family. PsbB subfamily. As to quaternary structure, PSII is composed of 1 copy each of membrane proteins PsbA, PsbB, PsbC, PsbD, PsbE, PsbF, PsbH, PsbI, PsbJ, PsbK, PsbL, PsbM, PsbT, PsbX, PsbY, PsbZ, Psb30/Ycf12, at least 3 peripheral proteins of the oxygen-evolving complex and a large number of cofactors. It forms dimeric complexes. Binds multiple chlorophylls. PSII binds additional chlorophylls, carotenoids and specific lipids. serves as cofactor.

The protein localises to the plastid. Its subcellular location is the chloroplast thylakoid membrane. Its function is as follows. One of the components of the core complex of photosystem II (PSII). It binds chlorophyll and helps catalyze the primary light-induced photochemical processes of PSII. PSII is a light-driven water:plastoquinone oxidoreductase, using light energy to abstract electrons from H(2)O, generating O(2) and a proton gradient subsequently used for ATP formation. This Cycas taitungensis (Prince sago) protein is Photosystem II CP47 reaction center protein.